We begin with the raw amino-acid sequence, 507 residues long: Histidine ammonia-lyase (507 aa).

Positions Ala141 to Gly143 form a cross-link, 5-imidazolinone (Ala-Gly). At Ser142 the chain carries 2,3-didehydroalanine (Ser).

This sequence belongs to the PAL/histidase family. Post-translationally, contains an active site 4-methylidene-imidazol-5-one (MIO), which is formed autocatalytically by cyclization and dehydration of residues Ala-Ser-Gly.

Its subcellular location is the cytoplasm. The enzyme catalyses L-histidine = trans-urocanate + NH4(+). Its pathway is amino-acid degradation; L-histidine degradation into L-glutamate; N-formimidoyl-L-glutamate from L-histidine: step 1/3. The polypeptide is Histidine ammonia-lyase (Burkholderia ambifaria (strain MC40-6)).